Reading from the N-terminus, the 54-residue chain is Hydrophobic protein RCI2B (54 aa).

2 helical membrane-spanning segments follow: residues 2–22 (STAT…GVFL) and 32–52 (ICLI…LYII).

This sequence belongs to the UPF0057 (PMP3) family.

The protein localises to the membrane. The chain is Hydrophobic protein RCI2B (RCI2B) from Arabidopsis thaliana (Mouse-ear cress).